A 512-amino-acid chain; its full sequence is Lysine--tRNA ligase (512 aa).

Residues glutamate 422 and glutamate 429 each contribute to the Mg(2+) site.

The protein belongs to the class-II aminoacyl-tRNA synthetase family. Homodimer. The cofactor is Mg(2+).

The protein resides in the cytoplasm. The enzyme catalyses tRNA(Lys) + L-lysine + ATP = L-lysyl-tRNA(Lys) + AMP + diphosphate. This chain is Lysine--tRNA ligase, found in Paraburkholderia phymatum (strain DSM 17167 / CIP 108236 / LMG 21445 / STM815) (Burkholderia phymatum).